We begin with the raw amino-acid sequence, 619 residues long: MKSLLDSLNFPKDLNNLNDSDTERLSKEIRQFLIESVSKTGGHLSSNLGVVELTLSLMKSFDFEKDKIVWDVGHQSYVYKILTGRKDGFKNLRQFDGLSGFPKRNESKYDYFDTGHSSTSISAGLGMARARDLKKEKYTVVSVIGDGALTGGMALEALNDVGFRKTKMVIILNDNQMSISLNVGGLSRYLNKLRMGETYNRLKTNINTSLGSSDLGKDIISKMSKVKDSIKQLVVPSMFFENMGVKYIGPIDGHDIKAMNEVFSKVKDVEGPVIIHTVTQKGRGYSLAEKSPSKYHAVPPRANEKEKPSKPCKDTYSKAFGNALINIAKEEKEVVAITAAMPDGTGLKEFSTIYPERFFDVGIAEQHAVTLAAGMAANGLKPVFAVYSTFLQRGFDQVIHDVCIQDLPVTFAIDRAGIVGDDGETHQGIMDVSYLSMMPNMTIVAPKCTEEIPSMLRWAIKKNSPVAIRYPRGKDIVCNLHALQEISYGKWEVVSEGKRICIIASGRMLQHAFLAKEILKENGIDPKIVNATFIKPIDKCLLENLKEDGYDILTIEDNIICGGLGMAVLEHLNCIDYKGNMKLLGYDDEFIPQGNVEILYKTYGLDPVSISNTILKLYN.

Residues H74 and 115–117 (GHS) contribute to the thiamine diphosphate site. D146 contacts Mg(2+). Residues 147 to 148 (GA), N175, and Y285 each bind thiamine diphosphate. N175 lines the Mg(2+) pocket. The tract at residues 289–312 (EKSPSKYHAVPPRANEKEKPSKPC) is disordered. A compositionally biased stretch (basic and acidic residues) spans 302-312 (ANEKEKPSKPC). Thiamine diphosphate is bound at residue E365.

It belongs to the transketolase family. DXPS subfamily. In terms of assembly, homodimer. Mg(2+) is required as a cofactor. It depends on thiamine diphosphate as a cofactor.

It carries out the reaction D-glyceraldehyde 3-phosphate + pyruvate + H(+) = 1-deoxy-D-xylulose 5-phosphate + CO2. It participates in metabolic intermediate biosynthesis; 1-deoxy-D-xylulose 5-phosphate biosynthesis; 1-deoxy-D-xylulose 5-phosphate from D-glyceraldehyde 3-phosphate and pyruvate: step 1/1. Its function is as follows. Catalyzes the acyloin condensation reaction between C atoms 2 and 3 of pyruvate and glyceraldehyde 3-phosphate to yield 1-deoxy-D-xylulose-5-phosphate (DXP). This is 1-deoxy-D-xylulose-5-phosphate synthase from Clostridium botulinum (strain Eklund 17B / Type B).